The primary structure comprises 362 residues: Neisseria adhesin A (362 aa).

Positions 1–23 (MKHFPSKVLTTAILATFCSGALA) are cleaved as a signal peptide. A head domain region spans residues 24 to 169 (ATSDDDVKKA…NIVKIDEKLE (146 aa)). 2 coiled-coil regions span residues 90–146 (VTNL…LNKL) and 183–288 (NDIA…KETR). Residues 170–307 (AVADTVDKHA…SGLFQPYNVG (138 aa)) are coiled stalk domain. The next 4 membrane-spanning stretches (beta stranded) occupy residues 307–317 (GRFNVTAAVGG), 321–332 (ESAVAIGTGFRF), 339–345 (KAGVAVG), and 351–362 (SAAYHVGVNYEW). The interval 308-362 (RFNVTAAVGGYKSESAVAIGTGFRFTENFAAKAGVAVGTSSGSSAAYHVGVNYEW) is translocator domain.

The protein belongs to the autotransporter-2 (AT-2) (TC 1.B.40) family. Forms high molecular weight oligomers in whole cell extracts that are not disrupted by boiling in SDS buffer. Homotrimer. A fragment containing the N-terminal half of the mature protein (residues 24-210, head domain plus part of the stalk) binds human integrin beta-1 (ITGB1). It was not seen to bind immobilized purified CEACAMs 1, 3, 5, 6 or 8 nor commercially prepared type I collagen, fibronectin or matrigel.

The protein localises to the cell surface. It is found in the cell outer membrane. Its function is as follows. Adheres to and induces bacterial uptake by human epithelial cells. Upon expression in engineered Y.enterocolitica confers an 11- to 15-fold increase in bacterial adherence and uptake by human epithelial cell lines; part of the uptake is mediated by integrin beta-1 (ITGB1) suggesting it may be a human receptor for NadA. A bacterial cell surface protein; antisera against this protein induce complement-mediated killing of this and other strains. The polypeptide is Neisseria adhesin A (Neisseria meningitidis serogroup B (strain ATCC BAA-335 / MC58)).